We begin with the raw amino-acid sequence, 622 residues long: MEGPGLGSQCRNHSHGSHVPGFGRHGICVHENKELAKAKEILPLIEDSSNCDIVKATQYGIFERCKELVEAGYDVRQPDRENVSLLHWAAINNRLELVKFYISKGAVIDQLGGDLNSTPLHWAIRQGHLPMVILLLQHGADPTLIDGEGFSSIHLAVLFQHMPIIAYLISKGQSVNMTDVNGQTPLMLSAYKVIGPEPTGFLLKFNPSLSVVDKTHQNTPLHWAVAAGNVSAVDKLLEAGSSLDIRNAKGETPLDMALQSKNQLISHMLRTEAKMRANKQFRLWRWLHKCELFLLLILSMITLWAVGYILDFNSDSWLLKGCLLVALFFLTSLFPRFLVGYKNLVYLPTVFLLSSIFWIFMTWFILFFPDTAGSPLYFAFIFSIMAFLYFFYKTWATDPGFTKASEEERKVNIVTLAETGSLDFRTFCTSCLIRKPLRSLHCHVCNSCVARFDQHCFWTGRCIGFGNHHHYIFFLLSLSMVCDWIIYGSFVYWSNHCATTFKEDGLWTYLNQIVACSPWVLYIFMLAAFHFSWSTFLLINQLFQIAFLGLTSHERISLLKQSRHMKQTLSLRKTPYNLGFTQNLADFFQCGCFGLVKPCIIDWTSQYTMVFHPAKEKVLRSV.

Met1 is subject to N-acetylmethionine. The Cytoplasmic portion of the chain corresponds to 1 to 291; that stretch reads MEGPGLGSQC…RLWRWLHKCE (291 aa). ANK repeat units follow at residues 43–78, 81–110, 115–144, 148–177, 181–211, 216–245, and 249–277; these read PLIE…VRQP, ENVS…VIDQ, LNST…DPTL, EGFS…SVNM, NGQT…SLSV, HQNT…SLDI, and KGET…KMRA. Residues 292–312 traverse the membrane as a helical segment; it reads LFLLLILSMITLWAVGYILDF. The Lumenal segment spans residues 313–320; sequence NSDSWLLK. A helical membrane pass occupies residues 321–341; sequence GCLLVALFFLTSLFPRFLVGY. At 342–347 the chain is on the cytoplasmic side; that stretch reads KNLVYL. Residues 348 to 368 traverse the membrane as a helical segment; sequence PTVFLLSSIFWIFMTWFILFF. Topologically, residues 369–371 are lumenal; it reads PDT. A helical transmembrane segment spans residues 372 to 392; the sequence is AGSPLYFAFIFSIMAFLYFFY. At 393–470 the chain is on the cytoplasmic side; that stretch reads KTWATDPGFT…RCIGFGNHHH (78 aa). The 51-residue stretch at 426–476 folds into the DHHC domain; sequence TFCTSCLIRKPLRSLHCHVCNSCVARFDQHCFWTGRCIGFGNHHHYIFFLL. Cys456 functions as the S-palmitoyl cysteine intermediate in the catalytic mechanism. Residues 471-491 traverse the membrane as a helical segment; the sequence is YIFFLLSLSMVCDWIIYGSFV. At 492–518 the chain is on the lumenal side; sequence YWSNHCATTFKEDGLWTYLNQIVACSP. A helical membrane pass occupies residues 519 to 539; the sequence is WVLYIFMLAAFHFSWSTFLLI. At 540–622 the chain is on the cytoplasmic side; sequence NQLFQIAFLG…PAKEKVLRSV (83 aa).

It belongs to the DHHC palmitoyltransferase family. AKR/ZDHHC17 subfamily. Interacts (via ANK repeats) with CLIP3. Interacts (via ANK repeats) with DNAJC5 (via C-terminus). Interacts (via ANK repeats) with HTT. Interacts (via ANK repeats) with MAP6. Interacts (via ANK repeats) with SNAP23. Interacts (via ANK repeats) with SNAP25. May interact (via ANK repeats) with SPRED2. As to expression, expressed in most adult tissues, but at low levels in the liver, skin, and lung.

The protein localises to the golgi apparatus membrane. It is found in the cytoplasmic vesicle membrane. The catalysed reaction is L-cysteinyl-[protein] + hexadecanoyl-CoA = S-hexadecanoyl-L-cysteinyl-[protein] + CoA. Its function is as follows. Palmitoyltransferase that could catalyze the addition of palmitate onto various protein substrates. Palmitoyltransferase for HTT and GAD2. May play a role in Mg(2+) transport. This Mus musculus (Mouse) protein is Palmitoyltransferase ZDHHC13.